A 417-amino-acid polypeptide reads, in one-letter code: Serine hydroxymethyltransferase (417 aa).

Residues Leu-121 and 125-127 (GHL) contribute to the (6S)-5,6,7,8-tetrahydrofolate site. Lys-229 is subject to N6-(pyridoxal phosphate)lysine. Position 355–357 (355–357 (SPF)) interacts with (6S)-5,6,7,8-tetrahydrofolate.

This sequence belongs to the SHMT family. As to quaternary structure, homodimer. The cofactor is pyridoxal 5'-phosphate.

It localises to the cytoplasm. It catalyses the reaction (6R)-5,10-methylene-5,6,7,8-tetrahydrofolate + glycine + H2O = (6S)-5,6,7,8-tetrahydrofolate + L-serine. The protein operates within one-carbon metabolism; tetrahydrofolate interconversion. It functions in the pathway amino-acid biosynthesis; glycine biosynthesis; glycine from L-serine: step 1/1. Functionally, catalyzes the reversible interconversion of serine and glycine with tetrahydrofolate (THF) serving as the one-carbon carrier. This reaction serves as the major source of one-carbon groups required for the biosynthesis of purines, thymidylate, methionine, and other important biomolecules. Also exhibits THF-independent aldolase activity toward beta-hydroxyamino acids, producing glycine and aldehydes, via a retro-aldol mechanism. This chain is Serine hydroxymethyltransferase, found in Shewanella baltica (strain OS185).